A 503-amino-acid polypeptide reads, in one-letter code: Inosine-5'-monophosphate dehydrogenase (503 aa).

Residues Gly-20 and Ser-22 each contribute to the K(+) site. CBS domains follow at residues Phe-103 to Val-163 and Met-167 to Ser-228. Asp-261–Ser-263 contributes to the NAD(+) binding site. The K(+) site is built by Asp-264, Phe-266, Gly-314, and Gly-316. Gly-312–Gly-314 is an NAD(+) binding site. Ser-317 provides a ligand contact to IMP. Cys-319 lines the K(+) pocket. Catalysis depends on Cys-319, which acts as the Thioimidate intermediate. Residues Asp-358–Gly-360, Gly-381–Arg-382, and Tyr-405–Gly-409 each bind IMP. Arg-418 acts as the Proton acceptor in catalysis. Glu-431 contacts IMP. 4 residues coordinate K(+): Asn-460, Glu-485, Gly-486, and Gly-487.

This sequence belongs to the IMPDH/GMPR family. In terms of assembly, homotetramer. Requires K(+) as cofactor.

The protein resides in the cytoplasm. It carries out the reaction IMP + NAD(+) + H2O = XMP + NADH + H(+). Its pathway is purine metabolism; XMP biosynthesis via de novo pathway; XMP from IMP: step 1/1. Its activity is regulated as follows. Mycophenolic acid (MPA) is a non-competitive inhibitor that prevents formation of the closed enzyme conformation by binding to the same site as the amobile flap. In contrast, mizoribine monophosphate (MZP) is a competitive inhibitor that induces the closed conformation. MPA is a potent inhibitor of mammalian IMPDHs but a poor inhibitor of the bacterial enzymes. MZP is a more potent inhibitor of bacterial IMPDH. In terms of biological role, catalyzes the conversion of inosine 5'-phosphate (IMP) to xanthosine 5'-phosphate (XMP), the first committed and rate-limiting step in the de novo synthesis of guanine nucleotides, and therefore plays an important role in the regulation of cell growth. Could also have a single-stranded nucleic acid-binding activity and could play a role in RNA and/or DNA metabolism. The sequence is that of Inosine-5'-monophosphate dehydrogenase from Tritrichomonas foetus (Trichomonas foetus).